We begin with the raw amino-acid sequence, 83 residues long: uncharacterized protein (83 aa).

This is an uncharacterized protein from Treponema pallidum (strain Nichols).